The sequence spans 30 residues: Mycofactocin precursor peptide (30 aa).

It belongs to the mycofactocin precursor peptide family. Interacts with MftB. In terms of processing, the post-translational modifications that lead to mycofactocin involve oxidative decarboxylation of the C-terminal tyrosine residue catalyzed by MftC, introduction of a tyramine-valine cross-link, removal of the modified C-terminal dipeptide by MftE. The released dipeptide then undergoes oxidative deamination by MftD, glycosylation by MftF and methylation by an unknown enzyme.

Precursor peptide that leads to mycofactocin (MFT) after extensive post-translational modifications by enzymes encoded by adjacent genes. Mycofactocin acts as a redox cofactor of nicotinamide-dependent oxidoreductases encoded in the same locus. This chain is Mycofactocin precursor peptide, found in Mycobacterium ulcerans (strain Agy99).